The following is a 156-amino-acid chain: Snaclec A12 (156 aa).

The first 23 residues, 1 to 23 (MGRSISVSFGLLVVFLSLSGTGA), serve as a signal peptide directing secretion. Disulfide bonds link C27-C38, C55-C148, and C123-C140. One can recognise a C-type lectin domain in the interval 34-149 (YEGHCYKVFN…CELAYHFICM (116 aa)).

Belongs to the snaclec family. Heterodimer; disulfide-linked. Expressed by the venom gland.

It is found in the secreted. Functionally, interferes with one step of hemostasis (modulation of platelet aggregation, or coagulation cascade, for example). This is Snaclec A12 from Macrovipera lebetinus (Levantine viper).